Here is a 54-residue protein sequence, read N- to C-terminus: Large ribosomal subunit protein bL33 (54 aa).

Belongs to the bacterial ribosomal protein bL33 family.

The chain is Large ribosomal subunit protein bL33 from Chloroflexus aggregans (strain MD-66 / DSM 9485).